The primary structure comprises 505 residues: Deoxyguanosinetriphosphate triphosphohydrolase (505 aa).

In terms of domain architecture, HD spans 66–273 (RLTHSLEVQQ…MEAADDISYC (208 aa)).

The protein belongs to the dGTPase family. Type 1 subfamily. Homotetramer. Mg(2+) is required as a cofactor.

The catalysed reaction is dGTP + H2O = 2'-deoxyguanosine + triphosphate + H(+). In terms of biological role, dGTPase preferentially hydrolyzes dGTP over the other canonical NTPs. The protein is Deoxyguanosinetriphosphate triphosphohydrolase of Escherichia fergusonii (strain ATCC 35469 / DSM 13698 / CCUG 18766 / IAM 14443 / JCM 21226 / LMG 7866 / NBRC 102419 / NCTC 12128 / CDC 0568-73).